The chain runs to 175 residues: Glutamyl-tRNA(Gln) amidotransferase subunit C, mitochondrial (175 aa).

The protein belongs to the GatC family. As to quaternary structure, subunit of the heterotrimeric GatCAB amidotransferase (AdT) complex, composed of A, B and C subunits.

Its subcellular location is the mitochondrion. The catalysed reaction is L-glutamyl-tRNA(Gln) + L-glutamine + ATP + H2O = L-glutaminyl-tRNA(Gln) + L-glutamate + ADP + phosphate + H(+). Allows the formation of correctly charged Gln-tRNA(Gln) through the transamidation of misacylated Glu-tRNA(Gln) in the mitochondria. The reaction takes place in the presence of glutamine and ATP through an activated gamma-phospho-Glu-tRNA(Gln). The chain is Glutamyl-tRNA(Gln) amidotransferase subunit C, mitochondrial from Caenorhabditis elegans.